The sequence spans 122 residues: Large ribosomal subunit protein uL14 (122 aa).

Belongs to the universal ribosomal protein uL14 family. As to quaternary structure, part of the 50S ribosomal subunit. Forms a cluster with proteins L3 and L19. In the 70S ribosome, L14 and L19 interact and together make contacts with the 16S rRNA in bridges B5 and B8.

In terms of biological role, binds to 23S rRNA. Forms part of two intersubunit bridges in the 70S ribosome. The chain is Large ribosomal subunit protein uL14 from Neisseria gonorrhoeae (strain ATCC 700825 / FA 1090).